Here is a 297-residue protein sequence, read N- to C-terminus: Diaminopimelate epimerase (297 aa).

Positions 13, 46, and 66 each coordinate substrate. The Proton donor role is filled by Cys76. Residues 77–78 (GN), Asn174, Asn207, and 225–226 (ER) each bind substrate. Cys234 functions as the Proton acceptor in the catalytic mechanism. Position 235–236 (235–236 (GT)) interacts with substrate.

The protein belongs to the diaminopimelate epimerase family. As to quaternary structure, homodimer.

It is found in the cytoplasm. It catalyses the reaction (2S,6S)-2,6-diaminopimelate = meso-2,6-diaminopimelate. It participates in amino-acid biosynthesis; L-lysine biosynthesis via DAP pathway; DL-2,6-diaminopimelate from LL-2,6-diaminopimelate: step 1/1. Functionally, catalyzes the stereoinversion of LL-2,6-diaminopimelate (L,L-DAP) to meso-diaminopimelate (meso-DAP), a precursor of L-lysine and an essential component of the bacterial peptidoglycan. The protein is Diaminopimelate epimerase of Leptothrix cholodnii (strain ATCC 51168 / LMG 8142 / SP-6) (Leptothrix discophora (strain SP-6)).